The primary structure comprises 275 residues: NH(3)-dependent NAD(+) synthetase (275 aa).

An ATP-binding site is contributed by 46-53 (GISGGQDS). Asp52 provides a ligand contact to Mg(2+). Residue Arg140 coordinates deamido-NAD(+). Thr160 provides a ligand contact to ATP. Glu165 serves as a coordination point for Mg(2+). Residues Lys173 and Asp180 each contribute to the deamido-NAD(+) site. Residues Lys189 and Thr211 each coordinate ATP. Deamido-NAD(+) is bound at residue 260-261 (HK).

This sequence belongs to the NAD synthetase family. In terms of assembly, homodimer.

The enzyme catalyses deamido-NAD(+) + NH4(+) + ATP = AMP + diphosphate + NAD(+) + H(+). It participates in cofactor biosynthesis; NAD(+) biosynthesis; NAD(+) from deamido-NAD(+) (ammonia route): step 1/1. In terms of biological role, catalyzes the ATP-dependent amidation of deamido-NAD to form NAD. Uses ammonia as a nitrogen source. In Escherichia coli (strain K12 / MC4100 / BW2952), this protein is NH(3)-dependent NAD(+) synthetase.